Consider the following 514-residue polypeptide: L-threonine dehydratase biosynthetic IlvA (514 aa).

K62 carries the N6-(pyridoxal phosphate)lysine modification. Residues N89, 188–192, and S315 contribute to the pyridoxal 5'-phosphate site; that span reads GGGGL. 2 ACT-like domains span residues 339–411 and 434–504; these read ALLA…DLSD and RLYS…DETN.

It belongs to the serine/threonine dehydratase family. As to quaternary structure, homotetramer. It depends on pyridoxal 5'-phosphate as a cofactor.

The catalysed reaction is L-threonine = 2-oxobutanoate + NH4(+). The protein operates within amino-acid biosynthesis; L-isoleucine biosynthesis; 2-oxobutanoate from L-threonine: step 1/1. Its activity is regulated as follows. Isoleucine allosterically inhibits whereas valine allosterically activates this enzyme. Functionally, catalyzes the anaerobic formation of alpha-ketobutyrate and ammonia from threonine in a two-step reaction. The first step involved a dehydration of threonine and a production of enamine intermediates (aminocrotonate), which tautomerizes to its imine form (iminobutyrate). Both intermediates are unstable and short-lived. The second step is the nonenzymatic hydrolysis of the enamine/imine intermediates to form 2-ketobutyrate and free ammonia. In the low water environment of the cell, the second step is accelerated by RidA. This chain is L-threonine dehydratase biosynthetic IlvA (ilvA), found in Escherichia coli (strain K12).